The primary structure comprises 164 residues: uncharacterized protein (164 aa).

An HTH marR-type domain is found at 28 to 157 (EAEILYQLQG…LIDVLARMRN (130 aa)). Positions 71 to 94 (QSDLQKKVNIDSAAVTRHLKQLES) form a DNA-binding region, H-T-H motif.

This is an uncharacterized protein from Bacillus subtilis (strain 168).